Here is a 209-residue protein sequence, read N- to C-terminus: tRNA (guanine-N(7)-)-methyltransferase (209 aa).

Residues Glu-40, Glu-65, and Asp-114 each contribute to the S-adenosyl-L-methionine site. Residue Asp-114 is part of the active site. Residues Asp-150 and 188 to 191 (TAFE) contribute to the substrate site.

It belongs to the class I-like SAM-binding methyltransferase superfamily. TrmB family.

It catalyses the reaction guanosine(46) in tRNA + S-adenosyl-L-methionine = N(7)-methylguanosine(46) in tRNA + S-adenosyl-L-homocysteine. It participates in tRNA modification; N(7)-methylguanine-tRNA biosynthesis. In terms of biological role, catalyzes the formation of N(7)-methylguanine at position 46 (m7G46) in tRNA. The chain is tRNA (guanine-N(7)-)-methyltransferase from Bdellovibrio bacteriovorus (strain ATCC 15356 / DSM 50701 / NCIMB 9529 / HD100).